The sequence spans 402 residues: Tryptophan synthase beta chain 2 (402 aa).

Lysine 97 carries the post-translational modification N6-(pyridoxal phosphate)lysine.

It belongs to the TrpB family. Tetramer of two alpha and two beta chains. Requires pyridoxal 5'-phosphate as cofactor.

It carries out the reaction (1S,2R)-1-C-(indol-3-yl)glycerol 3-phosphate + L-serine = D-glyceraldehyde 3-phosphate + L-tryptophan + H2O. It functions in the pathway amino-acid biosynthesis; L-tryptophan biosynthesis; L-tryptophan from chorismate: step 5/5. Its function is as follows. The beta subunit is responsible for the synthesis of L-tryptophan from indole and L-serine. This is Tryptophan synthase beta chain 2 (trpB2) from Wolinella succinogenes (strain ATCC 29543 / DSM 1740 / CCUG 13145 / JCM 31913 / LMG 7466 / NCTC 11488 / FDC 602W) (Vibrio succinogenes).